A 716-amino-acid chain; its full sequence is Fatty acid oxidation complex subunit alpha (716 aa).

Residues 1 to 189 (MIYQSPTIQV…KVGAVDAVVA (189 aa)) are enoyl-CoA hydratase/isomerase. D296 is a binding site for substrate. A 3-hydroxyacyl-CoA dehydrogenase region spans residues 311-716 (KEVNNAAVLG…AANNGSYYQA (406 aa)). NAD(+) contacts are provided by residues M324, D343, 400–402 (VVE), K407, and S429. H450 acts as the For 3-hydroxyacyl-CoA dehydrogenase activity in catalysis. NAD(+) is bound at residue N453. Residues N500 and Y660 each coordinate substrate.

It in the N-terminal section; belongs to the enoyl-CoA hydratase/isomerase family. This sequence in the C-terminal section; belongs to the 3-hydroxyacyl-CoA dehydrogenase family. As to quaternary structure, heterotetramer of two alpha chains (FadB) and two beta chains (FadA).

It carries out the reaction a (3S)-3-hydroxyacyl-CoA + NAD(+) = a 3-oxoacyl-CoA + NADH + H(+). It catalyses the reaction a (3S)-3-hydroxyacyl-CoA = a (2E)-enoyl-CoA + H2O. The catalysed reaction is a 4-saturated-(3S)-3-hydroxyacyl-CoA = a (3E)-enoyl-CoA + H2O. The enzyme catalyses (3S)-3-hydroxybutanoyl-CoA = (3R)-3-hydroxybutanoyl-CoA. It carries out the reaction a (3Z)-enoyl-CoA = a 4-saturated (2E)-enoyl-CoA. It catalyses the reaction a (3E)-enoyl-CoA = a 4-saturated (2E)-enoyl-CoA. It participates in lipid metabolism; fatty acid beta-oxidation. Its function is as follows. Involved in the aerobic and anaerobic degradation of long-chain fatty acids via beta-oxidation cycle. Catalyzes the formation of 3-oxoacyl-CoA from enoyl-CoA via L-3-hydroxyacyl-CoA. It can also use D-3-hydroxyacyl-CoA and cis-3-enoyl-CoA as substrate. The chain is Fatty acid oxidation complex subunit alpha from Shewanella baltica (strain OS223).